A 616-amino-acid polypeptide reads, in one-letter code: Fatty acyl-CoA reductase 2, chloroplastic (616 aa).

Residues 1-14 (MEALFLSSSSSSIV) constitute a chloroplast transit peptide. The short motif at 133 to 143 (FLITGSTGFLA) is the NAD(P)H-binding element. Residues tyrosine 357 and lysine 361 contribute to the active site.

This sequence belongs to the fatty acyl-CoA reductase family. As to expression, expressed in the tapetum of anthers.

The protein resides in the plastid. Its subcellular location is the chloroplast. It catalyses the reaction a long-chain fatty acyl-CoA + 2 NADPH + 2 H(+) = a long-chain primary fatty alcohol + 2 NADP(+) + CoA. The enzyme catalyses hexadecanoyl-CoA + 2 NADPH + 2 H(+) = hexadecan-1-ol + 2 NADP(+) + CoA. The catalysed reaction is hexadecanoyl-[ACP] + 2 NADPH + 2 H(+) = hexadecan-1-ol + holo-[ACP] + 2 NADP(+). Its function is as follows. Catalyzes the reduction of fatty acyl-CoA and -ACP (acyl carrier protein) substrates to fatty alcohols. Triggers the accumulation of C16 and C18 fatty alcohols; converts palmitoyl-acyl carrier protein to the corresponding C16:0 alcohol with NAD(P)H as electron donor, but seems inactive toward palmitoyl- or other acyl-coenzyme A. Also triggers the formation of some C16:0 aldehydes. Involved in the synthesis of the lipid component in sporopollenin. Required for exine patterning of pollen grain by mediating the formation of pollen wall substances. This chain is Fatty acyl-CoA reductase 2, chloroplastic, found in Arabidopsis thaliana (Mouse-ear cress).